The chain runs to 471 residues: Protein translocase subunit SecF (471 aa).

The disordered stretch occupies residues 1–29 (MVSRAKVGAETTKGIDEPDRNDNTDDNGA). The span at 13-23 (KGIDEPDRNDN) shows a compositional bias: basic and acidic residues. Transmembrane regions (helical) follow at residues 88-108 (GGVI…TFGI), 211-231 (ITKK…LYIT), 242-262 (ALTT…LVGF), 267-287 (ATVI…VIVF), 325-345 (LISV…LGVG), and 355-375 (LVGI…LLVT). The segment at 393 to 471 (RRTLGSQVGK…TGKRNNVGRR (79 aa)) is disordered. The span at 415–431 (KPQNQAESCADASSQEG) shows a compositional bias: polar residues. Residues 448-460 (PGVRPVRPTGTRR) show a composition bias toward low complexity. Positions 461–471 (PTGKRNNVGRR) are enriched in basic residues.

The protein belongs to the SecD/SecF family. SecF subfamily. Forms a complex with SecD. Part of the essential Sec protein translocation apparatus which comprises SecA, SecYEG and auxiliary proteins SecDF. Other proteins may also be involved.

The protein resides in the cell membrane. Its function is as follows. Part of the Sec protein translocase complex. Interacts with the SecYEG preprotein conducting channel. SecDF uses the proton motive force (PMF) to complete protein translocation after the ATP-dependent function of SecA. This is Protein translocase subunit SecF from Mycobacterium leprae (strain TN).